Consider the following 441-residue polypeptide: Peroxisome proliferator-activated receptor delta (441 aa).

Over residues 1-22 the composition is skewed to acidic residues; it reads MEQPQEEAPEVREEEEKEEVAE. The disordered stretch occupies residues 1-54; that stretch reads MEQPQEEAPEVREEEEKEEVAEAEGAPELNGGPQHALPSSSYTDLSRSSSPPSL. The span at 37-54 shows a compositional bias: low complexity; that stretch reads LPSSSYTDLSRSSSPPSL. Positions 71 to 145 form a DNA-binding region, nuclear receptor; it reads NMECRVCGDK…LGMSHNAIRF (75 aa). 2 consecutive NR C4-type zinc fingers follow at residues 74 to 94 and 111 to 133; these read CRVC…CEGC and CERS…FQKC. Positions 211 to 439 constitute an NR LBD domain; that stretch reads FVIHDIETLW…HPLLQEIYKD (229 aa).

Belongs to the nuclear hormone receptor family. NR1 subfamily. Heterodimer with the retinoid X receptor. Interacts (via domain NR LBD) with CRY1 and CRY2 in a ligand-dependent manner. 'Lys-48'-linked polyubiquitinated; leading to proteasomal degradation. Deubiquitinated and stabilized by OTUD3. As to expression, ubiquitous with maximal levels in placenta and skeletal muscle.

It is found in the nucleus. Its function is as follows. Ligand-activated transcription factor key mediator of energy metabolism in adipose tissues. Receptor that binds peroxisome proliferators such as hypolipidemic drugs and fatty acids. Has a preference for poly-unsaturated fatty acids, such as gamma-linoleic acid and eicosapentanoic acid. Once activated by a ligand, the receptor binds to promoter elements of target genes. Regulates the peroxisomal beta-oxidation pathway of fatty acids. Functions as transcription activator for the acyl-CoA oxidase gene. Decreases expression of NPC1L1 once activated by a ligand. The protein is Peroxisome proliferator-activated receptor delta of Homo sapiens (Human).